A 150-amino-acid chain; its full sequence is Viral late gene transcription factor 2 (150 aa).

The protein belongs to the orthopoxvirus VLTF-2/OPG126 family. Interacts with itself. Interacts with the late transcription factors VLTF-1/OPG093.

Acts with RNA polymerase to initiate transcription from late gene promoters. This Vaccinia virus (strain Copenhagen) (VACV) protein is Viral late gene transcription factor 2 (OPG126).